The chain runs to 286 residues: Flagellin FlaB2 (286 aa).

This sequence belongs to the bacterial flagellin family. In terms of assembly, the flagellum consists of an outer layer composed of repeating units of FlaA around a core that contains several antigenically related polypeptides. Interacts with FliW; a synthetic peptide of FlaB1 (residues 229-247) partially blocks binding of this protein to FliW.

It is found in the periplasmic flagellum. Its subcellular location is the periplasm. Component of the core of the flagella. The sequence is that of Flagellin FlaB2 from Treponema pallidum (strain Nichols).